Consider the following 636-residue polypeptide: MEQYKRILLKEFDSRQKVITELTNLEAILNLPKGTELYISDIHGEFAAFDYILRSCAGILNEKIKDCFGDSLSEVHKDRLSALVSYPELVLGEETKGQDWYQETIPQLLNLLAFAGAKYSRSKVRKALPPQYAYIIEELLYSDTALADKKSYFENILTYVIELREAVPFILGLSRSIRQLLIDHLHVVGDIFDRGVGSAQVIDELQHFHSLDIQWGNHDIIWMGAFFGSKACLLNVLRIAARYGYLWDIEKDYGLNLRSLTLFADKTYQSNPKFRPILGGREQEFSEEEILQLEKVHQALSIIQFKLENQLIKRRPEFQMQDHVMLDKIDYWEESITIDDTKHALVNTCFQTINPENPSALTPEENQAVDSMLASFQSSLKMAEHMSLLMNKGSMYKIYNKHLLFHGCIPLEPSGEFQPFILNQAHYAGKELLDFFEYHIRQAAKDKEVGDDLSTDLIWYCWKGKLSPLFGKEKMTTLERYFIEDKETHKEVENSYFSYRNSEKVCQLILEEFGLFSQESRMVNGHTPVKTGKGESPIRGGGLLFVIDGGLCKAYQKKTGTAGYSLLNNSYGFQLVTHQPFQNAQKVVESPFAQTSLKKVIENVEERTLIKSTTIGQSLLAQQQELFGLLHEFYDR.

It belongs to the FBPase class 3 family. Requires Mn(2+) as cofactor.

It catalyses the reaction beta-D-fructose 1,6-bisphosphate + H2O = beta-D-fructose 6-phosphate + phosphate. It participates in carbohydrate biosynthesis; gluconeogenesis. This Streptococcus sanguinis (strain SK36) protein is Fructose-1,6-bisphosphatase class 3.